The chain runs to 234 residues: Transcription factor ILR3 (234 aa).

The interval 34 to 85 is disordered; it reads QPIGVSSNSSAGVDGSAGNSEASKEPGSKKRGRCESSSATSSKACREKQRRD. The span at 36 to 54 shows a compositional bias: polar residues; it reads IGVSSNSSAGVDGSAGNSE. One can recognise a bHLH domain in the interval 71-122; it reads SATSSKACREKQRRDRLNDKFMELGAILEPGNPPKTDKAAILVDAVRMVTQL.

In terms of assembly, homodimer. Interacts with BTS and BHLH47/PYE. As to expression, widely expressed throughout development, mostly in vasculatures.

Its subcellular location is the nucleus. Functionally, transcription factor. Plays a role in resistance to amide-linked indole-3-acetic acid (IAA) conjugates such as IAA-Leu and IAA-Phe. May regulate gene expression in response to metal homeostasis changes. This Arabidopsis thaliana (Mouse-ear cress) protein is Transcription factor ILR3 (ILR3).